A 120-amino-acid chain; its full sequence is Large ribosomal subunit protein bL17 (120 aa).

It belongs to the bacterial ribosomal protein bL17 family. In terms of assembly, part of the 50S ribosomal subunit. Contacts protein L32.

The chain is Large ribosomal subunit protein bL17 from Geobacillus sp. (strain WCH70).